We begin with the raw amino-acid sequence, 356 residues long: Thrombopoietin (356 aa).

A signal peptide spans 1–21; that stretch reads MELTDLLLAAMLLAVARLTLS. Cystine bridges form between Cys28-Cys172 and Cys50-Cys106. N-linked (GlcNAc...) asparagine glycosylation is found at Asn197, Asn206, Asn235, Asn249, Asn256, Asn336, and Asn351. The segment at 291–356 is disordered; it reads GGLPPSPSLA…PHPRNLSQET (66 aa). Polar residues predominate over residues 330-339; that stretch reads PSTTMPNSTA.

Belongs to the EPO/TPO family. As to expression, found mainly in the liver, kidney and skeletal muscle.

It is found in the secreted. In terms of biological role, lineage-specific cytokine affecting the proliferation and maturation of megakaryocytes from their committed progenitor cells. It acts at a late stage of megakaryocyte development. It may be the major physiological regulator of circulating platelets. The protein is Thrombopoietin (Thpo) of Mus musculus (Mouse).